A 1125-amino-acid polypeptide reads, in one-letter code: Exportin-6 (1125 aa).

At A2 the chain carries N-acetylalanine. In terms of domain architecture, Importin N-terminal spans 31–97; the sequence is IEELLNNFAQ…RSCLPKLLLA (67 aa). Residue S199 is modified to Phosphoserine. Phosphothreonine occurs at positions 201 and 204. Phosphoserine occurs at positions 208 and 224.

The protein belongs to the exportin family. In terms of assembly, found in a complex with XPO6, Ran, ACTB and PFN1. Interacts with ACTB. Interacts with ACTB in a RanGTP-dependent manner.

It is found in the nucleus. The protein localises to the cytoplasm. Functionally, mediates the nuclear export of actin and profilin-actin complexes in somatic cells. In Mus musculus (Mouse), this protein is Exportin-6 (Xpo6).